The chain runs to 90 residues: RNA-binding protein Hfq (90 aa).

Residues 9–69 (DRFLNHLRVN…ISTIIPSSYV (61 aa)) form the Sm domain.

Belongs to the Hfq family. As to quaternary structure, homohexamer.

RNA chaperone that binds small regulatory RNA (sRNAs) and mRNAs to facilitate mRNA translational regulation in response to envelope stress, environmental stress and changes in metabolite concentrations. Also binds with high specificity to tRNAs. The protein is RNA-binding protein Hfq of Thermotoga sp. (strain RQ2).